A 363-amino-acid polypeptide reads, in one-letter code: NAD(P)H-quinone oxidoreductase subunit 1, chloroplastic (363 aa).

6 consecutive transmembrane segments (helical) span residues 30–50, 104–124, 127–147, 248–268, 300–320, and 343–363; these read LIPIFTLVLGITIGVLVIVWL, IAVISILLSYLVIPFSYHLVL, LSIGVFLWIAISSIAPVGLLM, YSGIKFGLFYVASYLNLLVSS, VFGTIIGIFITLAKTYLFLFI, and FLLPISLGNLLLTTCSQLISL.

Belongs to the complex I subunit 1 family. In terms of assembly, NDH is composed of at least 16 different subunits, 5 of which are encoded in the nucleus.

The protein resides in the plastid. It is found in the chloroplast thylakoid membrane. The enzyme catalyses a plastoquinone + NADH + (n+1) H(+)(in) = a plastoquinol + NAD(+) + n H(+)(out). It carries out the reaction a plastoquinone + NADPH + (n+1) H(+)(in) = a plastoquinol + NADP(+) + n H(+)(out). Functionally, NDH shuttles electrons from NAD(P)H:plastoquinone, via FMN and iron-sulfur (Fe-S) centers, to quinones in the photosynthetic chain and possibly in a chloroplast respiratory chain. The immediate electron acceptor for the enzyme in this species is believed to be plastoquinone. Couples the redox reaction to proton translocation, and thus conserves the redox energy in a proton gradient. This Lactuca sativa (Garden lettuce) protein is NAD(P)H-quinone oxidoreductase subunit 1, chloroplastic.